The chain runs to 110 residues: METIAKHRYARTSAQKARLVADLIRGKKVAAALEILTFTNKKAAALVKKVLESAIANAEHNDGADIDDLKVAKIFVDEGPSMKRVMPRAKGRADRILKRTSHITVVVSDR.

This sequence belongs to the universal ribosomal protein uL22 family. Part of the 50S ribosomal subunit.

Its function is as follows. This protein binds specifically to 23S rRNA; its binding is stimulated by other ribosomal proteins, e.g. L4, L17, and L20. It is important during the early stages of 50S assembly. It makes multiple contacts with different domains of the 23S rRNA in the assembled 50S subunit and ribosome. In terms of biological role, the globular domain of the protein is located near the polypeptide exit tunnel on the outside of the subunit, while an extended beta-hairpin is found that lines the wall of the exit tunnel in the center of the 70S ribosome. The polypeptide is Large ribosomal subunit protein uL22 (Pasteurella multocida (strain Pm70)).